Reading from the N-terminus, the 749-residue chain is Serine/threonine-protein phosphatase 4 regulatory subunit 3 (749 aa).

As to quaternary structure, regulatory subunit 3 (R3) of the histone H2A phosphatase complex (HTP-C) consisting of PPH3, PSY2 and PSY4.

It localises to the nucleus. Core regulatory subunit of the histone H2A phosphatase complex, which dephosphorylates H2AS128ph (gamma-H2A) that has been displaced from sites of DNA lesions in the double-stranded DNA break repair process. Dephosphorylation is necessary for efficient recovery from the DNA damage checkpoint. The polypeptide is Serine/threonine-protein phosphatase 4 regulatory subunit 3 (PSY2) (Kluyveromyces lactis (strain ATCC 8585 / CBS 2359 / DSM 70799 / NBRC 1267 / NRRL Y-1140 / WM37) (Yeast)).